Here is a 238-residue protein sequence, read N- to C-terminus: Large ribosomal subunit protein uL2 (238 aa).

The segment at 201-238 (PFGGGGRQHPGRPKTVSRNTPPGRKVGSIAARRTGVGH) is disordered.

This sequence belongs to the universal ribosomal protein uL2 family. In terms of assembly, part of the 50S ribosomal subunit. Forms a bridge to the 30S subunit in the 70S ribosome.

In terms of biological role, one of the primary rRNA binding proteins. Required for association of the 30S and 50S subunits to form the 70S ribosome, for tRNA binding and peptide bond formation. It has been suggested to have peptidyltransferase activity; this is somewhat controversial. Makes several contacts with the 16S rRNA in the 70S ribosome. This is Large ribosomal subunit protein uL2 from Methanocella arvoryzae (strain DSM 22066 / NBRC 105507 / MRE50).